A 462-amino-acid chain; its full sequence is Putative endoglucanase type B (462 aa).

Positions 1-16 (MAYKLILAAFAATALA) are cleaved as a signal peptide. The region spanning 25–61 (CSNGVWAQCGGQNWSGTPCCTSGNKCVKLNDFYSQCQ) is the CBM1 domain. 2 cysteine pairs are disulfide-bonded: Cys33-Cys50 and Cys44-Cys60. Asn37 is a glycosylation site (N-linked (GlcNAc...) asparagine). Residues 64–100 (SAEPSSTAAGPSSTTATKTTATGGSSTTAGGSVTSAP) show a composition bias toward low complexity. The interval 64–102 (SAEPSSTAAGPSSTTATKTTATGGSSTTAGGSVTSAPPA) is disordered. The linker stretch occupies residues 66–99 (EPSSTAAGPSSTTATKTTATGGSSTTAGGSVTSA). The tract at residues 100–462 (PPAASDNPYA…LLDNANPSFL (363 aa)) is catalytic. Asp190 is a catalytic residue. Cysteines 191 and 250 form a disulfide. The N-linked (GlcNAc...) asparagine glycan is linked to Asn223. Asp236 functions as the Proton donor in the catalytic mechanism. N-linked (GlcNAc...) asparagine glycans are attached at residues Asn272 and Asn317. A disulfide bridge connects residues Cys383 and Cys430. The active-site Nucleophile is Asp416.

The protein belongs to the glycosyl hydrolase 6 (cellulase B) family.

It catalyses the reaction Endohydrolysis of (1-&gt;4)-beta-D-glucosidic linkages in cellulose, lichenin and cereal beta-D-glucans.. This is Putative endoglucanase type B from Fusarium oxysporum (Fusarium vascular wilt).